A 389-amino-acid chain; its full sequence is Methylthioribose-1-phosphate isomerase (389 aa).

Catalysis depends on Asp258, which acts as the Proton donor.

This sequence belongs to the eIF-2B alpha/beta/delta subunits family. MtnA subfamily.

The protein localises to the cytoplasm. The protein resides in the nucleus. It catalyses the reaction 5-(methylsulfanyl)-alpha-D-ribose 1-phosphate = 5-(methylsulfanyl)-D-ribulose 1-phosphate. It participates in amino-acid biosynthesis; L-methionine biosynthesis via salvage pathway; L-methionine from S-methyl-5-thio-alpha-D-ribose 1-phosphate: step 1/6. Its function is as follows. Catalyzes the interconversion of methylthioribose-1-phosphate (MTR-1-P) into methylthioribulose-1-phosphate (MTRu-1-P). This is Methylthioribose-1-phosphate isomerase from Chaetomium globosum (strain ATCC 6205 / CBS 148.51 / DSM 1962 / NBRC 6347 / NRRL 1970) (Soil fungus).